A 592-amino-acid chain; its full sequence is MRKAPLLRFTLASLALACSQAFAAPSPYSGMIVFGDSLSDAGQFGGVRFTNLDANGNYAPVSPMILGGQLGVNPTELGPSTSPLNPVLGLPDGNNWAVGGYTTQQILDSITSTSETVIPPGRPGAGQVLREKPGYLANGLRADPNALYYLTGGGNDFLQGLVNSPADAAAAGARLAASAQALQQGGARYIMVWLLPDLGQTPNFSGTPQQTPLSLLSGVFNQSLLSQLGQIDAEIIPLNVPMLLSEALASPSQFGLATGQNLVGTCSSGEGCVENPVYGINGTTPDPTKLLFNDLVHPTIAGQQLIADYAYSILSAPWELTLLPEMAHTSLRAHQDELRNQWQTPWQAVGSGKPLSPAAPRTWISTARAGASGDGRGYNLTVGGSYRLNDAWRLGLAGGVYRQKLEAGGHDSDYTLNSYLASAFAQYRQDRWWADAALTAGHLDYSDLKRTFALGVNDRSEKGDTDGEAWAISGRLGYNLAADSSNWQLAPFISADYARVKVDGYDEKSGRSTALGFDDQARTSRRLGLGLQGSVQVLPSTRLFAEVAQEHEFEDDRQDVTMHLTSLPANDFTLTGYTPHTAPDPGEPGGKP.

The first 23 residues, 1 to 23 (MRKAPLLRFTLASLALACSQAFA), serve as a signal peptide directing secretion. Ser37 acts as the Nucleophile in catalysis. Residues Asp294 and His297 contribute to the active site. Positions 334 to 592 (HQDELRNQWQ…PDPGEPGGKP (259 aa)) constitute an Autotransporter domain. Residues 572-592 (FTLTGYTPHTAPDPGEPGGKP) form a disordered region.

This sequence belongs to the 'GDSL' lipolytic enzyme family.

This is an uncharacterized protein from Pseudomonas putida (Arthrobacter siderocapsulatus).